We begin with the raw amino-acid sequence, 644 residues long: DNA gyrase subunit B (644 aa).

Residues 429–543 (CEIFLVEGDS…AGYVYIAQPP (115 aa)) enclose the Toprim domain. Residues E435, D508, and D510 each contribute to the Mg(2+) site.

Belongs to the type II topoisomerase GyrB family. Heterotetramer, composed of two GyrA and two GyrB chains. In the heterotetramer, GyrA contains the active site tyrosine that forms a transient covalent intermediate with DNA, while GyrB binds cofactors and catalyzes ATP hydrolysis. The cofactor is Mg(2+). Mn(2+) serves as cofactor. It depends on Ca(2+) as a cofactor.

The protein localises to the cytoplasm. It carries out the reaction ATP-dependent breakage, passage and rejoining of double-stranded DNA.. Its function is as follows. A type II topoisomerase that negatively supercoils closed circular double-stranded (ds) DNA in an ATP-dependent manner to modulate DNA topology and maintain chromosomes in an underwound state. Negative supercoiling favors strand separation, and DNA replication, transcription, recombination and repair, all of which involve strand separation. Also able to catalyze the interconversion of other topological isomers of dsDNA rings, including catenanes and knotted rings. Type II topoisomerases break and join 2 DNA strands simultaneously in an ATP-dependent manner. The polypeptide is DNA gyrase subunit B (Staphylococcus aureus (strain Mu50 / ATCC 700699)).